The following is a 102-amino-acid chain: Small ribosomal subunit protein uS10 (102 aa).

This sequence belongs to the universal ribosomal protein uS10 family. In terms of assembly, part of the 30S ribosomal subunit.

Functionally, involved in the binding of tRNA to the ribosomes. This Lactobacillus delbrueckii subsp. bulgaricus (strain ATCC 11842 / DSM 20081 / BCRC 10696 / JCM 1002 / NBRC 13953 / NCIMB 11778 / NCTC 12712 / WDCM 00102 / Lb 14) protein is Small ribosomal subunit protein uS10.